An 858-amino-acid polypeptide reads, in one-letter code: Bifunctional uridylyltransferase/uridylyl-removing enzyme (858 aa).

Residues 1-324 are uridylyltransferase; that stretch reads MSASVAEPPP…PATSGVTRVL (324 aa). Positions 325-681 are uridylyl-removing; that stretch reads SPGRFVEKQG…ARPSPVGDAL (357 aa). Positions 443-565 constitute an HD domain; that stretch reads VDQHILMVLR…VGSERRLTAL (123 aa). 2 consecutive ACT domains span residues 682-761 and 790-858; these read QVLV…PEPS and ILSV…AIAV.

It belongs to the GlnD family. The cofactor is Mg(2+).

The catalysed reaction is [protein-PII]-L-tyrosine + UTP = [protein-PII]-uridylyl-L-tyrosine + diphosphate. It catalyses the reaction [protein-PII]-uridylyl-L-tyrosine + H2O = [protein-PII]-L-tyrosine + UMP + H(+). With respect to regulation, uridylyltransferase (UTase) activity is inhibited by glutamine, while glutamine activates uridylyl-removing (UR) activity. Its function is as follows. Modifies, by uridylylation and deuridylylation, the PII regulatory proteins (GlnB and homologs), in response to the nitrogen status of the cell that GlnD senses through the glutamine level. Under low glutamine levels, catalyzes the conversion of the PII proteins and UTP to PII-UMP and PPi, while under higher glutamine levels, GlnD hydrolyzes PII-UMP to PII and UMP (deuridylylation). Thus, controls uridylylation state and activity of the PII proteins, and plays an important role in the regulation of nitrogen assimilation and metabolism. The sequence is that of Bifunctional uridylyltransferase/uridylyl-removing enzyme from Burkholderia mallei (strain NCTC 10247).